Here is a 340-residue protein sequence, read N- to C-terminus: Ribonucleoside-diphosphate reductase small subunit (340 aa).

Fe cation contacts are provided by aspartate 94, glutamate 124, and histidine 127. Tyrosine 131 is a catalytic residue. The helical transmembrane segment at 180 to 200 threads the bilayer; it reads FILMILIEGIFFAASFAAIAY. The Fe cation site is built by glutamate 187, glutamate 221, and histidine 224.

Belongs to the ribonucleoside diphosphate reductase small chain family. As to quaternary structure, heterotetramer composed of a homodimer of the large subunit (R1) and a homodimer of the small subunit (R2). Larger multisubunit protein complex are also active, composed of (R1)n(R2)n. The cofactor is Fe cation.

It localises to the host membrane. The catalysed reaction is a 2'-deoxyribonucleoside 5'-diphosphate + [thioredoxin]-disulfide + H2O = a ribonucleoside 5'-diphosphate + [thioredoxin]-dithiol. Functionally, ribonucleoside-diphosphate reductase holoenzyme provides the precursors necessary for viral DNA synthesis. Allows virus growth in non-dividing cells, as well as reactivation from latency in infected hosts. Catalyzes the biosynthesis of deoxyribonucleotides from the corresponding ribonucleotides. The polypeptide is Ribonucleoside-diphosphate reductase small subunit (Human herpesvirus 1 (strain KOS) (HHV-1)).